We begin with the raw amino-acid sequence, 132 residues long: uncharacterized protein (132 aa).

This is an uncharacterized protein from Bacillus subtilis (strain 168).